We begin with the raw amino-acid sequence, 336 residues long: Glyceraldehyde-3-phosphate dehydrogenase (336 aa).

Residues 12–13, D34, R78, and T121 contribute to the NAD(+) site; that span reads RI. D-glyceraldehyde 3-phosphate is bound by residues 151–153, T182, R199, 212–213, and R235; these read SCT and TG. Residue C152 is the Nucleophile of the active site. N316 serves as a coordination point for NAD(+).

Belongs to the glyceraldehyde-3-phosphate dehydrogenase family. Homotetramer.

It is found in the cytoplasm. It catalyses the reaction D-glyceraldehyde 3-phosphate + phosphate + NAD(+) = (2R)-3-phospho-glyceroyl phosphate + NADH + H(+). Its pathway is carbohydrate degradation; glycolysis; pyruvate from D-glyceraldehyde 3-phosphate: step 1/5. In terms of biological role, catalyzes the oxidative phosphorylation of glyceraldehyde 3-phosphate (G3P) to 1,3-bisphosphoglycerate (BPG) using the cofactor NAD. The first reaction step involves the formation of a hemiacetal intermediate between G3P and a cysteine residue, and this hemiacetal intermediate is then oxidized to a thioester, with concomitant reduction of NAD to NADH. The reduced NADH is then exchanged with the second NAD, and the thioester is attacked by a nucleophilic inorganic phosphate to produce BPG. The chain is Glyceraldehyde-3-phosphate dehydrogenase (gap) from Streptococcus dysgalactiae subsp. equisimilis (Streptococcus equisimilis).